A 673-amino-acid polypeptide reads, in one-letter code: Methionine--tRNA ligase (673 aa).

The 'HIGH' region signature appears at 15–25 (PYANGPIHLGH). Residues C146, C149, C159, and C162 each contribute to the Zn(2+) site. The short motif at 332–336 (KMSKS) is the 'KMSKS' region element. An ATP-binding site is contributed by K335. Residues 572–673 (DFAKLDLRIA…EGAQPGMRVK (102 aa)) form the tRNA-binding domain.

This sequence belongs to the class-I aminoacyl-tRNA synthetase family. MetG type 1 subfamily. Homodimer. The cofactor is Zn(2+).

Its subcellular location is the cytoplasm. It catalyses the reaction tRNA(Met) + L-methionine + ATP = L-methionyl-tRNA(Met) + AMP + diphosphate. Its function is as follows. Is required not only for elongation of protein synthesis but also for the initiation of all mRNA translation through initiator tRNA(fMet) aminoacylation. The polypeptide is Methionine--tRNA ligase (Shewanella loihica (strain ATCC BAA-1088 / PV-4)).